The following is a 317-amino-acid chain: Ferrochelatase (317 aa).

2 residues coordinate Fe cation: His191 and Glu271.

The protein belongs to the ferrochelatase family.

The protein localises to the cytoplasm. The enzyme catalyses heme b + 2 H(+) = protoporphyrin IX + Fe(2+). Its pathway is porphyrin-containing compound metabolism; protoheme biosynthesis; protoheme from protoporphyrin-IX: step 1/1. In terms of biological role, catalyzes the ferrous insertion into protoporphyrin IX. This Thermus thermophilus (strain ATCC BAA-163 / DSM 7039 / HB27) protein is Ferrochelatase.